The primary structure comprises 313 residues: Ribonuclease Z (313 aa).

Residues histidine 63, histidine 65, aspartate 67, histidine 68, histidine 142, aspartate 212, and histidine 270 each coordinate Zn(2+). Catalysis depends on aspartate 67, which acts as the Proton acceptor.

The protein belongs to the RNase Z family. Homodimer. Requires Zn(2+) as cofactor.

The enzyme catalyses Endonucleolytic cleavage of RNA, removing extra 3' nucleotides from tRNA precursor, generating 3' termini of tRNAs. A 3'-hydroxy group is left at the tRNA terminus and a 5'-phosphoryl group is left at the trailer molecule.. Its function is as follows. Zinc phosphodiesterase, which displays some tRNA 3'-processing endonuclease activity. Probably involved in tRNA maturation, by removing a 3'-trailer from precursor tRNA. The sequence is that of Ribonuclease Z from Enterococcus faecalis (strain ATCC 700802 / V583).